The primary structure comprises 256 residues: Lysosomal membrane ascorbate-dependent ferrireductase CYB561A3 (256 aa).

The Cytoplasmic portion of the chain corresponds to 1-3 (MAS). Residues 4-24 (GWFYMSCMVLGSLGSMCILFT) form a helical membrane-spanning segment. The Cytochrome b561 domain maps to 12–219 (VLGSLGSMCI…FGLLVLYILL (208 aa)). Residues 25-40 (TYWMQYWRGGFAWDGT) lie on the Lumenal side of the membrane. Residues 41–61 (VLMFNWHPVLMVSGMVVLYGA) traverse the membrane as a helical segment. Heme b contacts are provided by H47 and R67. Topologically, residues 62–83 (ASLVYRLPASWVGPKLPWKVLH) are cytoplasmic. 2 residues coordinate L-ascorbate: K76 and K80. Residue H83 participates in heme b binding. The helical transmembrane segment at 84 to 104 (AALHLLAFTVTVVGLTAVFGF) threads the bilayer. Topologically, residues 105–119 (HNHSKITHLYSLHSW) are lumenal. N106 carries an N-linked (GlcNAc...) asparagine glycan. Residues 112–115 (HLYS) and H117 contribute to the heme b site. The helical transmembrane segment at 120-140 (LGITTVALFACQWFLGFAVFL) threads the bilayer. Over 141–154 (LPWASQWLRSLLKP) the chain is Cytoplasmic. R149 serves as a coordination point for L-ascorbate. The chain crosses the membrane as a helical span at residues 155–175 (VHVFFGACILSLSIASVISGI). Heme b-binding residues include H156 and E177. The Lumenal segment spans residues 176-202 (NEKLFFVLKNATRPYSSLPGEAVFANS). Residues 203 to 223 (TGILVVSFGLLVLYILLASSW) traverse the membrane as a helical segment. Position 224 (R224) interacts with heme b. At 224 to 256 (RRPDPGALTDRQVWLLVSHYRWDKAKKACFAPC) the chain is on the cytoplasmic side.

In terms of assembly, homodimer. It depends on heme b as a cofactor. N-glycosylated.

Its subcellular location is the late endosome membrane. It is found in the lysosome membrane. The enzyme catalyses Fe(3+)(out) + L-ascorbate(in) = monodehydro-L-ascorbate radical(in) + Fe(2+)(out) + H(+). Functionally, transmembrane reductase that uses ascorbate as an electron donor in the cytoplasm and transfers electrons across membranes to reduce iron cations Fe(3+) into Fe(2+) in the lumen of the late endosome and lysosome. Reduced iron can then be extruded from the late endosome and lysosome to the cytoplasm by divalent metal-specific transporters. It is therefore most probably involved in endosomal and lysosomal cellular iron homeostasis. The protein is Lysosomal membrane ascorbate-dependent ferrireductase CYB561A3 of Rattus norvegicus (Rat).